Consider the following 114-residue polypeptide: FK506-binding protein 1 (114 aa).

The residue at position 2 (serine 2) is an N-acetylserine. The PPIase FKBP-type domain maps to glycine 26–asparagine 114. The residue at position 51 (serine 51) is a Phosphoserine.

This sequence belongs to the FKBP-type PPIase family. FKBP1 subfamily. As to quaternary structure, interacts with HOM3; the interaction is direct, plays a role in feedback inhibition of aspartokinase by threonine, and is inhibited by tacrolimus and sirolimus. Interacts with HMO1. Interacts with FAP1.

The protein localises to the cytoplasm. Its subcellular location is the mitochondrion. It carries out the reaction [protein]-peptidylproline (omega=180) = [protein]-peptidylproline (omega=0). Functionally, PPIases accelerate the folding of proteins. It catalyzes the cis-trans isomerization of proline imidic peptide bonds in oligopeptides. Plays a role in feedback inhibition of the pathway synthesizing the aspartate family of amino acids by binding to aspartokinase. In Saccharomyces cerevisiae (strain ATCC 204508 / S288c) (Baker's yeast), this protein is FK506-binding protein 1 (FPR1).